A 241-amino-acid polypeptide reads, in one-letter code: DnaA regulatory inactivator Hda (241 aa).

Belongs to the DnaA family. HdA subfamily. As to quaternary structure, the active form seems to be an ADP-bound monomer. Forms the RIDA complex (regulatory inactivation of DnaA) of ATP-DnaA, ADP-Hda and the DNA-loaded beta sliding clamp (dnaN).

Its function is as follows. Mediates the interaction of DNA replication initiator protein DnaA with DNA polymerase subunit beta sliding clamp (dnaN). Stimulates hydrolysis of ATP-DnaA to ADP-DnaA, rendering DnaA inactive for reinitiation, a process called regulatory inhibition of DnaA or RIDA. In Salmonella paratyphi A (strain ATCC 9150 / SARB42), this protein is DnaA regulatory inactivator Hda.